A 213-amino-acid polypeptide reads, in one-letter code: Glycerol-3-phosphate acyltransferase (213 aa).

6 helical membrane-spanning segments follow: residues 3 to 23 (IIIL…GLWI), 48 to 68 (ILGV…GTLA), 71 to 91 (LPLI…LAVI), 119 to 139 (PFFL…FSMI), 144 to 164 (VVAA…GFIL), and 165 to 185 (TSYD…IIFR).

It belongs to the PlsY family. As to quaternary structure, probably interacts with PlsX.

It localises to the cell membrane. It catalyses the reaction an acyl phosphate + sn-glycerol 3-phosphate = a 1-acyl-sn-glycero-3-phosphate + phosphate. Its pathway is lipid metabolism; phospholipid metabolism. Functionally, catalyzes the transfer of an acyl group from acyl-phosphate (acyl-PO(4)) to glycerol-3-phosphate (G3P) to form lysophosphatidic acid (LPA). This enzyme utilizes acyl-phosphate as fatty acyl donor, but not acyl-CoA or acyl-ACP. The protein is Glycerol-3-phosphate acyltransferase of Lactococcus lactis subsp. cremoris (strain MG1363).